The sequence spans 726 residues: Catalase-peroxidase (726 aa).

The tract at residues 1–25 is disordered; the sequence is MDAKTDDSAGKCPFTGGGRRGHRNR. The tryptophyl-tyrosyl-methioninium (Trp-Tyr) (with M-244) cross-link spans 96-218; sequence WHSAGTYRIT…LAAVQMGLIY (123 aa). The active-site Proton acceptor is the His97. The tryptophyl-tyrosyl-methioninium (Tyr-Met) (with W-96) cross-link spans 218-244; it reads YVNPEGPNGNPDPVAAAKDIRETFYRM. Heme b is bound at residue His259.

It belongs to the peroxidase family. Peroxidase/catalase subfamily. In terms of assembly, homodimer or homotetramer. It depends on heme b as a cofactor. Post-translationally, formation of the three residue Trp-Tyr-Met cross-link is important for the catalase, but not the peroxidase activity of the enzyme.

It catalyses the reaction H2O2 + AH2 = A + 2 H2O. It carries out the reaction 2 H2O2 = O2 + 2 H2O. Bifunctional enzyme with both catalase and broad-spectrum peroxidase activity. The sequence is that of Catalase-peroxidase from Chelativorans sp. (strain BNC1).